The chain runs to 227 residues: Isopentenyl-diphosphate Delta-isomerase 1 (227 aa).

Position 36 (K36) interacts with substrate. Positions 40 and 51 each coordinate Mg(2+). The 151-residue stretch at 49-199 (LLHRAFSVFL…EIKITPWFKI (151 aa)) folds into the Nudix hydrolase domain. R70 and K74 together coordinate substrate. Residue C86 is part of the active site. Substrate is bound at residue S87. 2 residues coordinate Mg(2+): E146 and E148. Residue E148 is part of the active site. K176 is subject to N6-acetyllysine. A Microbody targeting signal motif is present at residues 225–227 (YRM).

The protein belongs to the IPP isomerase type 1 family. In terms of assembly, monomer. Mg(2+) serves as cofactor.

It is found in the peroxisome. The enzyme catalyses isopentenyl diphosphate = dimethylallyl diphosphate. Its pathway is isoprenoid biosynthesis; dimethylallyl diphosphate biosynthesis; dimethylallyl diphosphate from isopentenyl diphosphate: step 1/1. In terms of biological role, catalyzes the 1,3-allylic rearrangement of the homoallylic substrate isopentenyl (IPP) to its highly electrophilic allylic isomer, dimethylallyl diphosphate (DMAPP). This Homo sapiens (Human) protein is Isopentenyl-diphosphate Delta-isomerase 1 (IDI1).